We begin with the raw amino-acid sequence, 560 residues long: Diphtheria toxin (560 aa).

An N-terminal signal peptide occupies residues methionine 1–alanine 25. The NAD(+) site is built by histidine 46 and tyrosine 90. Residue glutamate 173 is part of the active site. Intrachain disulfides connect cysteine 211–cysteine 226 and cysteine 486–cysteine 496.

Homodimer.

The enzyme catalyses diphthamide-[translation elongation factor 2] + NAD(+) = N-(ADP-D-ribosyl)diphthamide-[translation elongation factor 2] + nicotinamide + H(+). In terms of biological role, diphtheria toxin, produced by a phage infecting Corynebacterium diphtheriae, is a proenzyme that, after activation, catalyzes the covalent attachment of the ADP ribose moiety of NAD to elongation factor 2. Fragment A is responsible for enzymatic ADP-ribosylation of elongation factor 2, while fragment B is responsible for binding of toxin to cell receptors and entry of fragment A. The protein is Diphtheria toxin of Corynephage omega.